Here is a 685-residue protein sequence, read N- to C-terminus: Sodium-dependent phosphate transporter 1 (685 aa).

Transmembrane regions (helical) follow at residues phenylalanine 25–alanine 45, alanine 66–serine 86, leucine 106–phenylalanine 126, isoleucine 162–tyrosine 182, alanine 201–glycine 221, and glycine 234–valine 254. Residues valine 482 to isoleucine 492 are compositionally biased toward acidic residues. Residues valine 482–aspartate 513 form a disordered region. A compositionally biased stretch (basic and acidic residues) spans alanine 496–aspartate 513. The next 4 membrane-spanning stretches (helical) occupy residues valine 517 to glycine 537, alanine 565 to tryptophan 585, phenylalanine 606 to isoleucine 626, and isoleucine 656 to alanine 676.

Belongs to the inorganic phosphate transporter (PiT) (TC 2.A.20) family.

It localises to the cell membrane. The catalysed reaction is 2 Na(+)(out) + phosphate(out) = 2 Na(+)(in) + phosphate(in). Functionally, sodium-phosphate symporter which preferentially transports the monovalent form of phosphate with a stoichiometry of two sodium ions per phosphate ion. The sequence is that of Sodium-dependent phosphate transporter 1 (slc20a1) from Xenopus tropicalis (Western clawed frog).